A 532-amino-acid chain; its full sequence is Pre-rRNA-processing protein pro-1 (532 aa).

2 WD repeats span residues 136–175 and 287–326; these read AHYQNITKLALSDDDSMVFTASKDGAIHGYLVTELVSADR and GHSDEITRLTINTDGTLLASGDASGKYCIWEISSHQCLKV. Residues 435–464 are disordered; the sequence is TLGDDEDDAPEVGNQRRQNKKNNKKNRKLQ. Positions 445–526 form a coiled coil; the sequence is EVGNQRRQNK…INRQMYEFVA (82 aa). Positions 451–464 are enriched in basic residues; it reads RQNKKNNKKNRKLQ.

The protein belongs to the WD repeat IPI3/WDR18 family. Component of the PELP1 complex, composed of at least PELP1, TEX10 and WDR18. The complex interacts with pre-60S ribosome particles.

Its subcellular location is the nucleus. The protein localises to the nucleolus. The protein resides in the nucleoplasm. Component of the PELP1 complex involved in the nucleolar steps of 28S rRNA maturation and the subsequent nucleoplasmic transit of the pre-60S ribosomal subunit. Required for processing ITS2 sequences from rRNA intermediates during 26S rRNA maturation. Required in the soma to promote normal proliferation and prevent germline tumor formation. The chain is Pre-rRNA-processing protein pro-1 (pro-1) from Caenorhabditis briggsae.